Reading from the N-terminus, the 228-residue chain is uncharacterized protein (228 aa).

Residues 77-79, Gly-113, Val-133, and 140-142 each bind S-adenosyl-L-methionine; these read TTA and PSL.

This sequence belongs to the class IV-like SAM-binding methyltransferase superfamily. RNA methyltransferase TrmH family.

This is an uncharacterized protein from Escherichia coli (strain K12).